Consider the following 156-residue polypeptide: MGTSRLYTLVLVLQPERVLLGMKKRGFGAGRWNGFGGKVQEGETIEDGAKRELREESGLTVDTLHKVGQIMFEFVGEPELMDVHIFCTDSVQGTPVESDEMRPQWFQLDQIPFTDMWPDDSYWFPLLLQKKKFHGYFRFQGPNTILDYTLREVDKL.

Positions 3-132 constitute a Nudix hydrolase domain; it reads TSRLYTLVLV…WFPLLLQKKK (130 aa). Residue threonine 8 coordinates 2-oxo-dATP. Lysine 23 lines the 8-oxo-dGTP pocket. Residues asparagine 33 and 35-38 contribute to the 2-oxo-dATP site; that span reads FGGK. Positions 36, 52, 55, 56, and 100 each coordinate Mg(2+). Residues 37-58 carry the Nudix box motif; the sequence is GKVQEGETIEDGAKRELREESG. 117-120 lines the 2-oxo-dATP pocket; that stretch reads WPDD.

The protein belongs to the Nudix hydrolase family. Monomer. The cofactor is Mg(2+).

Its subcellular location is the cytoplasm. It is found in the nucleus. The protein resides in the nucleus membrane. The protein localises to the cytoplasmic vesicle. It localises to the secretory vesicle. Its subcellular location is the acrosome. It catalyses the reaction 2-oxo-dATP + H2O = 2-oxo-dAMP + diphosphate + H(+). It carries out the reaction 2-oxo-ATP + H2O = 2-oxo-AMP + diphosphate + H(+). The enzyme catalyses 8-oxo-dGTP + H2O = 8-oxo-dGMP + diphosphate + H(+). The catalysed reaction is 8-oxo-dATP + H2O = 8-oxo-dAMP + diphosphate + H(+). It catalyses the reaction O(6)-methyl-dGTP + H2O = O(6)-methyl-dGMP + diphosphate + H(+). It carries out the reaction N(6)-methyl-dATP + H2O = N(6)-methyl-dAMP + diphosphate + H(+). The enzyme catalyses N(6)-methyl-ATP + H2O = N(6)-methyl-AMP + diphosphate + H(+). Functionally, oxidized purine nucleoside triphosphate hydrolase which is a prominent sanitizer of the oxidized nucleotide pool. Catalyzes the hydrolysis of 2-oxo-dATP (2-hydroxy-dATP) into 2-oxo-dAMP. Also has a significant hydrolase activity toward 2-oxo-ATP, 8-oxo-dGTP and 8-oxo-dATP. Through the hydrolysis of oxidized purine nucleoside triphosphates, prevents their incorporation into DNA and the subsequent transversions A:T to C:G and G:C to T:A. Also catalyzes the hydrolysis of methylated purine nucleoside triphosphate preventing their integration into DNA. Through this antimutagenic activity protects cells from oxidative stress. This Canis lupus familiaris (Dog) protein is Oxidized purine nucleoside triphosphate hydrolase (NUDT1).